Reading from the N-terminus, the 468-residue chain is ATP synthase subunit beta (468 aa).

155-162 (GGAGVGKT) serves as a coordination point for ATP.

Belongs to the ATPase alpha/beta chains family. In terms of assembly, F-type ATPases have 2 components, CF(1) - the catalytic core - and CF(0) - the membrane proton channel. CF(1) has five subunits: alpha(3), beta(3), gamma(1), delta(1), epsilon(1). CF(0) has three main subunits: a(1), b(2) and c(9-12). The alpha and beta chains form an alternating ring which encloses part of the gamma chain. CF(1) is attached to CF(0) by a central stalk formed by the gamma and epsilon chains, while a peripheral stalk is formed by the delta and b chains.

The protein resides in the cell membrane. It catalyses the reaction ATP + H2O + 4 H(+)(in) = ADP + phosphate + 5 H(+)(out). In terms of biological role, produces ATP from ADP in the presence of a proton gradient across the membrane. The catalytic sites are hosted primarily by the beta subunits. This is ATP synthase subunit beta from Streptococcus pneumoniae (strain ATCC BAA-255 / R6).